Here is a 218-residue protein sequence, read N- to C-terminus: Large ribosomal subunit protein uL3 (218 aa).

Belongs to the universal ribosomal protein uL3 family. As to quaternary structure, part of the 50S ribosomal subunit. Forms a cluster with proteins L14 and L19.

One of the primary rRNA binding proteins, it binds directly near the 3'-end of the 23S rRNA, where it nucleates assembly of the 50S subunit. This chain is Large ribosomal subunit protein uL3, found in Brachyspira pilosicoli (Serpulina pilosicoli).